Here is a 307-residue protein sequence, read N- to C-terminus: Malate dehydrogenase (307 aa).

NAD(+) contacts are provided by residues 8–13 (GAGNVG) and D32. Residues R81 and R87 each contribute to the substrate site. NAD(+) contacts are provided by residues N94 and 117–119 (VSN). Substrate is bound by residues N119 and R150. Catalysis depends on H174, which acts as the Proton acceptor.

This sequence belongs to the LDH/MDH superfamily. MDH type 3 family.

It catalyses the reaction (S)-malate + NAD(+) = oxaloacetate + NADH + H(+). Its function is as follows. Catalyzes the reversible oxidation of malate to oxaloacetate. The chain is Malate dehydrogenase from Dehalococcoides mccartyi (strain ATCC BAA-2100 / JCM 16839 / KCTC 5957 / BAV1).